The sequence spans 558 residues: MHHATPLITTIVGGLVLAFILGMLANKLRISPLVGYLLAGVLAGPFTPGFVADTKLAPELAELGVILLMFGVGLHFSLKDLMAVKAIAIPGAIAQIAVATLLGMALSAVLGWSLMTGIVFGLCLSTASTVVLLRALEERQLIDSQRGQIAIGWLIVEDLVMVLTLVLLPAVAGMMEQGDVGFATLAVDMGITIGKVIAFIAIMMLVGRRLVPWIMARSAATGSRELFTLSVLALALGVAFGAVELFDVSFALGAFFAGMVLNESELSHRAAHDTLPLRDAFAVLFFVSVGMLFDPLILIQQPLAVLATLAIILFGKSLAAFFLVRLFGHSQRTALTIAASLAQIGEFAFILAGLGMALNLLPQAGQNLVLAGAILSIMLNPVLFALLEKYLAKTETLEEQTLEEAIEEEKQIPVDICNHALLVGYGRVGSLLGEKLLASDIPLVVIETSRTRVDELRERGVRAVLGNAANEEIMQLAHLECAKWLILTIPNGYEAGEIVASARAKNPDIEIIARAHYDDEVAYITERGANQVVMGEREIARTMLELLETPPAGEVVTG.

Topologically, residues 1–3 (MHH) are periplasmic. The chain crosses the membrane as a helical span at residues 4-24 (ATPLITTIVGGLVLAFILGML). The Cytoplasmic portion of the chain corresponds to 25–31 (ANKLRIS). The helical transmembrane segment at 32–52 (PLVGYLLAGVLAGPFTPGFVA) threads the bilayer. The Periplasmic portion of the chain corresponds to 53–55 (DTK). The helical transmembrane segment at 56 to 76 (LAPELAELGVILLMFGVGLHF) threads the bilayer. The Cytoplasmic portion of the chain corresponds to 77–85 (SLKDLMAVK). A helical membrane pass occupies residues 86-106 (AIAIPGAIAQIAVATLLGMAL). Over 107 to 112 (SAVLGW) the chain is Periplasmic. Residues 113–133 (SLMTGIVFGLCLSTASTVVLL) form a helical membrane-spanning segment. Topologically, residues 134–148 (RALEERQLIDSQRGQ) are cytoplasmic. A helical membrane pass occupies residues 149 to 169 (IAIGWLIVEDLVMVLTLVLLP). Over 170 to 185 (AVAGMMEQGDVGFATL) the chain is Periplasmic. Residues 186–206 (AVDMGITIGKVIAFIAIMMLV) form a helical membrane-spanning segment. At 207-225 (GRRLVPWIMARSAATGSRE) the chain is on the cytoplasmic side. Residues 226 to 246 (LFTLSVLALALGVAFGAVELF) traverse the membrane as a helical segment. Residue aspartate 247 is a topological domain, periplasmic. Residues 248-268 (VSFALGAFFAGMVLNESELSH) traverse the membrane as a helical segment. The Cytoplasmic portion of the chain corresponds to 269-279 (RAAHDTLPLRD). The helical transmembrane segment at 280–300 (AFAVLFFVSVGMLFDPLILIQ) threads the bilayer. Residues 301–303 (QPL) lie on the Periplasmic side of the membrane. A helical transmembrane segment spans residues 304-324 (AVLATLAIILFGKSLAAFFLV). Residues 325 to 336 (RLFGHSQRTALT) are Cytoplasmic-facing. The helical transmembrane segment at 337–357 (IAASLAQIGEFAFILAGLGMA) threads the bilayer. At 358-367 (LNLLPQAGQN) the chain is on the periplasmic side. The chain crosses the membrane as a helical span at residues 368–388 (LVLAGAILSIMLNPVLFALLE). At 389–558 (KYLAKTETLE…TPPAGEVVTG (170 aa)) the chain is on the cytoplasmic side. The 118-residue stretch at 417–534 (CNHALLVGYG…TERGANQVVM (118 aa)) folds into the RCK N-terminal domain. AMP-binding positions include 427 to 428 (RV), 447 to 448 (ET), 467 to 468 (NA), glutamate 494, and arginine 514.

This sequence belongs to the monovalent cation:proton antiporter 2 (CPA2) transporter (TC 2.A.37) family.

The protein localises to the cell inner membrane. This Escherichia coli (strain K12) protein is Putative cation/proton antiporter YbaL (ybaL).